We begin with the raw amino-acid sequence, 817 residues long: Rho GTPase-activating protein gacII (817 aa).

The region spanning 20-204 (TTIVKIGTPK…TLIEEFQYIS (185 aa)) is the Rho-GAP domain. In terms of domain architecture, SH3 spans 238 to 298 (EDYLIAKANT…SQTYVDIIDI (61 aa)). A compositionally biased stretch (low complexity) spans 318–339 (ASTILHTPPTSSSSSSSSSSSS). 3 disordered regions span residues 318 to 638 (ASTI…NIPV), 691 to 771 (LGGQ…QQQQ), and 783 to 817 (LPPQ…FNKN). Residues 340 to 358 (ILLTDNQPKLCSSTPRINN) are compositionally biased toward polar residues. A compositionally biased stretch (low complexity) spans 359-391 (SPSSFSPSLSSTTPQLLVQQSPRQSPRQIPSIS). Polar residues predominate over residues 396-438 (PNNTNQPSFGHGTLQRTSTGYFSSKPLSISQPINMSKPTNMSP). Pro residues predominate over residues 461-471 (PPLPTKPPPLT). Over residues 472-498 (IPSSSSLPTTPIKQQPQQPIQQPLTPQ) the composition is skewed to low complexity. Over residues 509-532 (LSSSVNTANTGNCANILSPNSDRY) the composition is skewed to polar residues. 3 stretches are compositionally biased toward low complexity: residues 534-568 (SSRS…SSTS), 577-587 (KSKSSKNSPSK), and 607-624 (ITTT…TIAT). The segment covering 625 to 635 (TPPPPSKPLPN) has biased composition (pro residues). Polar residues predominate over residues 705-722 (KSQSSYLDNNNLPSRNTN). Residues 725-734 (NLPPRPPPLN) show a composition bias toward pro residues. Composition is skewed to low complexity over residues 735 to 744 (IPQQQQQYKP) and 752 to 771 (QSPQ…QQQQ). The segment covering 785–803 (PQNTNLSGKNLQRSSTSML) has biased composition (polar residues). The segment covering 807-817 (LPPPPFSFNKN) has biased composition (pro residues).

It is found in the cytoplasm. In terms of biological role, rho GTPase-activating protein involved in the signal transduction pathway. The sequence is that of Rho GTPase-activating protein gacII (gacII) from Dictyostelium discoideum (Social amoeba).